The sequence spans 179 residues: Replication restart protein DnaT (179 aa).

Residues 154–179 (SNGGLPKRDVNTVSEPDSQIPPGFRG) are disordered.

Belongs to the DnaT family. In terms of assembly, homooligomerizes. Interacts with PriB. Component of the replication restart primosome. Primosome assembly occurs via a 'hand-off' mechanism. PriA binds to replication forks, subsequently PriB then DnaT bind; DnaT then displaces ssDNA to generate the helicase loading substrate.

Involved in the restart of stalled replication forks, which reloads the replicative helicase on sites other than the origin of replication. Can function in multiple replication restart pathways. Displaces ssDNA from a PriB-ssDNA complex. Probably forms a spiral filament on ssDNA. The protein is Replication restart protein DnaT of Escherichia coli O127:H6 (strain E2348/69 / EPEC).